The chain runs to 325 residues: Plasminogen (325 aa).

2 Kringle domains span residues 80 to 146 and 159 to 217; these read ACVK…VPSC and LTPA…VLSV. 4 cysteine pairs are disulfide-bonded: Cys-81-Cys-146, Cys-102-Cys-135, Cys-124-Cys-141, and Cys-188-Cys-212.

The protein belongs to the peptidase S1 family. Plasminogen subfamily.

Its subcellular location is the secreted. It catalyses the reaction Preferential cleavage: Lys-|-Xaa &gt; Arg-|-Xaa, higher selectivity than trypsin. Converts fibrin into soluble products.. In terms of biological role, plasmin dissolves the fibrin of blood clots and acts as a proteolytic factor in a variety of other processes including embryonic development, tissue remodeling, tumor invasion, and inflammation. The chain is Plasminogen from Petromyzon marinus (Sea lamprey).